The chain runs to 716 residues: Probable glutamate--tRNA ligase, cytoplasmic (716 aa).

Residue serine 190 is modified to Phosphoserine. Position 210–212 (210–212) interacts with L-glutamate; the sequence is RFP. Residues 215–224 carry the 'HIGH' region motif; the sequence is PSGYLHIGHA. Histidine 220 contributes to the ATP binding site. L-glutamate contacts are provided by residues aspartate 246, 386–390, and arginine 404; that span reads YDFAC. Residues glutamate 407 and 441-445 contribute to the ATP site; that span reads LLSKR. Residues 441-445 carry the 'KMSKS' region motif; the sequence is LLSKR.

The protein belongs to the class-I aminoacyl-tRNA synthetase family. Glutamate--tRNA ligase type 2 subfamily. Component of a yeast aminoacyl-tRNA synthase (aaRS) complex formed by methionyl-tRNA synthase, glutamyl-tRNA synthase and the tRNA aminoacylation cofactor arc1 in a stoichiometric complex. Interacts with arc1/SPAC30C2.04.

It is found in the cytoplasm. The protein localises to the nucleus. The catalysed reaction is tRNA(Glu) + L-glutamate + ATP = L-glutamyl-tRNA(Glu) + AMP + diphosphate. In terms of biological role, catalyzes the attachment of glutamate to tRNA(Glu) in a two-step reaction: glutamate is first activated by ATP to form Glu-AMP and then transferred to the acceptor end of tRNA(Glu). This chain is Probable glutamate--tRNA ligase, cytoplasmic (gus1), found in Schizosaccharomyces pombe (strain 972 / ATCC 24843) (Fission yeast).